Here is a 467-residue protein sequence, read N- to C-terminus: Histidine--tRNA ligase (467 aa).

This sequence belongs to the class-II aminoacyl-tRNA synthetase family. Homodimer.

The protein resides in the cytoplasm. The catalysed reaction is tRNA(His) + L-histidine + ATP = L-histidyl-tRNA(His) + AMP + diphosphate + H(+). In Gloeobacter violaceus (strain ATCC 29082 / PCC 7421), this protein is Histidine--tRNA ligase.